We begin with the raw amino-acid sequence, 672 residues long: Prion-like-(Q/N-rich) domain-bearing protein 25 (672 aa).

Residues 26-46 (VPPPIMICLFFLLLQIFVISV) traverse the membrane as a helical segment.

Its subcellular location is the membrane. In Caenorhabditis elegans, this protein is Prion-like-(Q/N-rich) domain-bearing protein 25 (pqn-25).